Consider the following 879-residue polypeptide: Bifunctional uridylyltransferase/uridylyl-removing enzyme (879 aa).

Residues 1 to 340 are uridylyltransferase; that stretch reads MANVQEDKDF…GTQDLQHAEH (340 aa). The tract at residues 341–700 is uridylyl-removing; sequence ISDDFAVANK…IGDENNYGTT (360 aa). Residues 458 to 580 form the HD domain; that stretch reads VDEHTFRLVR…VSTPERLDYL (123 aa). ACT domains lie at 701–782 and 809–879; these read ELFI…STKR and TFEL…DLEF.

This sequence belongs to the GlnD family. Mg(2+) serves as cofactor.

It carries out the reaction [protein-PII]-L-tyrosine + UTP = [protein-PII]-uridylyl-L-tyrosine + diphosphate. It catalyses the reaction [protein-PII]-uridylyl-L-tyrosine + H2O = [protein-PII]-L-tyrosine + UMP + H(+). Its activity is regulated as follows. Uridylyltransferase (UTase) activity is inhibited by glutamine, while glutamine activates uridylyl-removing (UR) activity. Its function is as follows. Modifies, by uridylylation and deuridylylation, the PII regulatory proteins (GlnB and homologs), in response to the nitrogen status of the cell that GlnD senses through the glutamine level. Under low glutamine levels, catalyzes the conversion of the PII proteins and UTP to PII-UMP and PPi, while under higher glutamine levels, GlnD hydrolyzes PII-UMP to PII and UMP (deuridylylation). Thus, controls uridylylation state and activity of the PII proteins, and plays an important role in the regulation of nitrogen assimilation and metabolism. This Idiomarina loihiensis (strain ATCC BAA-735 / DSM 15497 / L2-TR) protein is Bifunctional uridylyltransferase/uridylyl-removing enzyme.